The sequence spans 568 residues: 2-succinyl-5-enolpyruvyl-6-hydroxy-3-cyclohexene-1-carboxylate synthase (568 aa).

Belongs to the TPP enzyme family. MenD subfamily. In terms of assembly, homodimer. It depends on Mg(2+) as a cofactor. The cofactor is Mn(2+). Thiamine diphosphate serves as cofactor.

It carries out the reaction isochorismate + 2-oxoglutarate + H(+) = 5-enolpyruvoyl-6-hydroxy-2-succinyl-cyclohex-3-ene-1-carboxylate + CO2. It functions in the pathway quinol/quinone metabolism; 1,4-dihydroxy-2-naphthoate biosynthesis; 1,4-dihydroxy-2-naphthoate from chorismate: step 2/7. Its pathway is quinol/quinone metabolism; menaquinone biosynthesis. Catalyzes the thiamine diphosphate-dependent decarboxylation of 2-oxoglutarate and the subsequent addition of the resulting succinic semialdehyde-thiamine pyrophosphate anion to isochorismate to yield 2-succinyl-5-enolpyruvyl-6-hydroxy-3-cyclohexene-1-carboxylate (SEPHCHC). This is 2-succinyl-5-enolpyruvyl-6-hydroxy-3-cyclohexene-1-carboxylate synthase from Haemophilus influenzae (strain PittEE).